The following is an 861-amino-acid chain: Methyltransferase/ribosomally synthesized type III borosin cyclic peptide precursor aboMAa (861 aa).

The segment at 1 to 279 (MSSPAVETKV…AISTFYLPPK (279 aa)) is methyltransferase domain. Residues Arg-100, Tyr-104, and Tyr-126 contribute to the active site. Residues Tyr-126, His-128, Val-131, Ala-158, Gln-200, Ala-241, Ser-272, and Thr-273 each contribute to the S-adenosyl-L-methionine site. The tract at residues 280–408 (ALSPLHEESA…GLVRSVMKTS (129 aa)) is clasp domain. The type III-specific C-terminal domain stretch occupies residues 409–799 (PEDVAKQFVQ…PPDLEELPIP (391 aa)). Disordered stretches follow at residues 575-596 (NGAF…SSQG) and 772-801 (EAAE…IPDA). Positions 579–593 (PSGGGGGSGGGGGSS) are enriched in gly residues. Residues 772 to 783 (EAAEKDSAVDDE) show a composition bias toward basic and acidic residues. Over residues 784–797 (KFADEEPPDLEELP) the composition is skewed to acidic residues. Val-805 and Val-807 each carry N-methylvaline. 9 tandem repeats follow at residues 805-809 (VDVTD), 810-814 (VDVTD), 815-819 (VDVTD), 820-824 (VDVTD), 825-829 (VDVTD), 830-834 (VDVTD), 835-839 (VDVTD), 840-844 (VDVTD), and 845-849 (VDVTD). The 10 X 5 AA tandem repeats of VDVTD stretch occupies residues 805–854 (VDVTDVDVTDVDVTDVDVTDVDVTDVDVTDVDVTDVDVTDVDVTDVDVVD). Thr-808 is modified (N-methylthreonine). Val-810 and Val-812 each carry N-methylvaline. An N-methylthreonine modification is found at Thr-813. N-methylvaline occurs at positions 815 and 817. Thr-818 carries the N-methylthreonine modification. Residues Val-820 and Val-822 each carry the N-methylvaline modification. Thr-823 is subject to N-methylthreonine. N-methylvaline is present on residues Val-825 and Val-827. Thr-828 is modified (N-methylthreonine). N-methylvaline is present on residues Val-830 and Val-832. Thr-833 carries the N-methylthreonine modification. The 10; approximate repeat unit spans residues 850–854 (VDVVD).

The protein in the N-terminal section; belongs to the precorrin methyltransferase family. AboMA automethylates at Val-805, Val-807, Thr-808, Val-810, Val-812, Thr-813, Val-815, Val-817, Thr-818, Val-820, Val-822, Thr-823, Val-825, Val-827 and Thr-828, Val-830, Val-832 and T-833 before being processed by a prolyloligopeptidase which likely forms a peptidyl ester upon removal of the follower propeptide, which then undergoes macrocyclization with the N-terminus of the modified core peptide. Peptide backbone alpha-N-methylations change the physicochemical properties of amide bonds to provide structural constraints and other favorable characteristics including biological membrane permeability to peptides.

It functions in the pathway secondary metabolite biosynthesis. Functionally, fusion protein of the methyltransferase aboM and a type III borosin core peptide; part of the gene cluster that mediates the biosynthesis of a type III borosin, a highly methylated cyclic peptide with potent biological activities. Type III borosins derive from the C-terminus of the fusion protein, and it is the same protein that methylates its own C-terminus using S-adenosyl methionine (SAM). The C-terminus is subsequently cleaved off and macrocyclized by a prolyloligopeptidase to give the final product. The protein is Methyltransferase/ribosomally synthesized type III borosin cyclic peptide precursor aboMAa of Anomoporia bombycina (Polyporus bombycinus).